The chain runs to 1065 residues: DNA ligase 4 (1065 aa).

A disordered region spans residues M1–Q20. ATP-binding residues include E295, K297, L298, R302, E357, F387, E452, K457, K474, and K476. The active-site N6-AMP-lysine intermediate is K297. A Mg(2+)-binding site is contributed by E357. A Mg(2+)-binding site is contributed by E452. The BRCT 1 domain maps to V696–L775. The disordered stretch occupies residues G825 to Y928. Composition is skewed to basic and acidic residues over residues E834–Q864 and M886–R900. Residues D954–P1064 enclose the BRCT 2 domain.

The protein belongs to the ATP-dependent DNA ligase family. The cofactor is Mg(2+).

The protein localises to the nucleus. It carries out the reaction ATP + (deoxyribonucleotide)n-3'-hydroxyl + 5'-phospho-(deoxyribonucleotide)m = (deoxyribonucleotide)n+m + AMP + diphosphate.. Functionally, DNA ligase involved in DNA non-homologous end joining (NHEJ); required for double-strand break (DSB) repair. The protein is DNA ligase 4 (LIG4) of Cryptococcus neoformans var. neoformans serotype D (strain B-3501A) (Filobasidiella neoformans).